The sequence spans 169 residues: Peptide deformylase 1 (169 aa).

Fe cation is bound by residues C93 and H135. The active site involves E136. H139 lines the Fe cation pocket.

Belongs to the polypeptide deformylase family. Requires Fe(2+) as cofactor.

The catalysed reaction is N-terminal N-formyl-L-methionyl-[peptide] + H2O = N-terminal L-methionyl-[peptide] + formate. Removes the formyl group from the N-terminal Met of newly synthesized proteins. Requires at least a dipeptide for an efficient rate of reaction. N-terminal L-methionine is a prerequisite for activity but the enzyme has broad specificity at other positions. The polypeptide is Peptide deformylase 1 (Corynebacterium efficiens (strain DSM 44549 / YS-314 / AJ 12310 / JCM 11189 / NBRC 100395)).